Reading from the N-terminus, the 256-residue chain is Repetitive proline-rich cell wall protein 1 (256 aa).

An N-terminal signal peptide occupies residues 1–26 (MRNMASLSSSLVLLLAALILSPQVLA). Repeat copies occupy residues 31–35 (PPIYK), 36–40 (PPVYT), 41–45 (PPVYK), 46–50 (PPVEK), 51–55 (PPVYK), 56–60 (PPVYK), 61–65 (PPVEK), 66–70 (PPVYK), 71–75 (PPVYK), 76–80 (PPIYK), 81–85 (PPVYK), 86–90 (PPVEK), 91–95 (PPVYK), 96–100 (PPVYK), 101–105 (PPVYK), 106–110 (PPVYK), 111–115 (PPIEK), 116–120 (PPVYK), 121–125 (PPVYK), 126–130 (PPVYK), 131–135 (PPVYK), 136–140 (PPVYK), 141–145 (PPVYK), 146–150 (PPVEK), 151–155 (PPVYK), 156–160 (PPVYK), 161–165 (PPVYK), 166–170 (PPVYK), 171–175 (PPVEK), 176–180 (PPVYK), 181–185 (PPVYK), 186–190 (PPVYK), 191–195 (PPVYK), 196–200 (PPVEK), 201–205 (PPIYK), 206–210 (PPVYK), 211–215 (PPIEK), 216–220 (PPVYK), 221–225 (PPVYK), 226–230 (PPVYK), 231–235 (PPVYK), 236–240 (PPVKK), 241–245 (PPIYK), and 246–250 (PPYPK). The interval 31 to 250 (PPIYKPPVYT…PPIYKPPYPK (220 aa)) is 44 X 5 AA tandem repeats of P-P-[VIY]-[EYKP]-[KT]. The disordered stretch occupies residues 233–256 (VYKPPVKKPPIYKPPYPKYPPGSN).

The protein belongs to the plant proline-rich protein superfamily. ENOD12 family.

Its subcellular location is the secreted. The protein resides in the cell wall. Functionally, this is a developmentally regulated putative cell wall protein. The sequence is that of Repetitive proline-rich cell wall protein 1 (PRP1) from Glycine max (Soybean).